The chain runs to 78 residues: Beta-defensin 105A (78 aa).

A signal peptide spans 1-27; that stretch reads MALIRKTFYFLFAVFFVLVQLPSECQA. 3 disulfide bridges follow: C43–C74, C53–C67, and C57–C73.

It belongs to the beta-defensin family.

It is found in the secreted. Has antimicrobial activity. This chain is Beta-defensin 105A (DEFB105A), found in Pongo pygmaeus (Bornean orangutan).